The chain runs to 61 residues: Large ribosomal subunit protein uL30 (61 aa).

This sequence belongs to the universal ribosomal protein uL30 family. In terms of assembly, part of the 50S ribosomal subunit.

This Caulobacter vibrioides (strain ATCC 19089 / CIP 103742 / CB 15) (Caulobacter crescentus) protein is Large ribosomal subunit protein uL30.